A 287-amino-acid chain; its full sequence is Glucose uptake protein GlcU (287 aa).

8 helical membrane passes run Leu-4–Gly-26, Ala-38–Val-60, Trp-110–Leu-132, Ile-153–Val-175, Ala-180–Tyr-197, Ile-210–Gln-227, Val-232–Leu-254, and Arg-261–Ala-283.

This sequence belongs to the GRP transporter (TC 2.A.7.5) family.

The protein resides in the cell membrane. Functionally, involved in the uptake of glucose. The polypeptide is Glucose uptake protein GlcU (glcU) (Bacillus subtilis (strain 168)).